The primary structure comprises 272 residues: uncharacterized protein (272 aa).

This is an uncharacterized protein from Sinorhizobium fredii (strain NBRC 101917 / NGR234).